Consider the following 166-residue polypeptide: Small ribosomal subunit protein uS5 (166 aa).

An S5 DRBM domain is found at 12 to 75 (YIEKLVQVNR…EAARRNMIQV (64 aa)).

It belongs to the universal ribosomal protein uS5 family. In terms of assembly, part of the 30S ribosomal subunit. Contacts proteins S4 and S8.

Its function is as follows. With S4 and S12 plays an important role in translational accuracy. Located at the back of the 30S subunit body where it stabilizes the conformation of the head with respect to the body. This Pseudomonas fluorescens (strain ATCC BAA-477 / NRRL B-23932 / Pf-5) protein is Small ribosomal subunit protein uS5.